The sequence spans 535 residues: Arginine-containing cyclodipeptide synthase anoA (535 aa).

The tract at residues 93–114 (LLSPPREPGPIDSETKTREKKS) is disordered. Residues 105–114 (SETKTREKKS) show a composition bias toward basic and acidic residues. The Conserved DDXXE motif signature appears at 424–428 (DDIAE).

The protein belongs to the arginine-containing cyclodipeptide synthase family.

It carries out the reaction L-tryptophyl-tRNA(Trp) + L-arginyl-tRNA(Arg) = cyclo(L-arginyl-L-tryptophyl) + tRNA(Trp) + tRNA(Arg) + H(+). Its pathway is secondary metabolite biosynthesis. In terms of biological role, arginine-containing cyclodipeptide synthase; part of the cluster that mediates the biosynthesis of a highly modified cyclo-arginine-tryptophan dipeptide (cRW). Within the pathway, AnoA acts as the scaffold-generating enzyme and is responsible for formation of the cyclo-Arg-Trp diketopiperazine (cRW) from L-arginyl-tRNA(Arg) + L-tryptophanyl-tRNA(Trp). Additional enzymes from the cluster then further modify the cyclo-Arg-Asp diketopiperazine (cRW) scaffold. In Aspergillus nomiae (Aspergillus nomius), this protein is Arginine-containing cyclodipeptide synthase anoA.